Reading from the N-terminus, the 576-residue chain is Arginine--tRNA ligase (576 aa).

The 'HIGH' region motif lies at 122 to 132; it reads PNVAKQMHVGH.

It belongs to the class-I aminoacyl-tRNA synthetase family. In terms of assembly, monomer.

It is found in the cytoplasm. It carries out the reaction tRNA(Arg) + L-arginine + ATP = L-arginyl-tRNA(Arg) + AMP + diphosphate. This is Arginine--tRNA ligase from Yersinia pseudotuberculosis serotype IB (strain PB1/+).